Consider the following 75-residue polypeptide: Alpha-elapitoxin-Bc2b (75 aa).

Residues 1–2 (YT) form the signal peptide. 5 disulfides stabilise this stretch: Cys5-Cys24, Cys17-Cys45, Cys30-Cys34, Cys49-Cys60, and Cys61-Cys66.

Monomer in solution, homodimer in crystal state. Expressed by the venom gland.

It is found in the secreted. Its function is as follows. Binds to muscular and neuronal nicotinic acetylcholine receptor (nAChR) and inhibits acetylcholine from binding to the receptor, thereby impairing neuromuscular and neuronal transmission. Blocks muscle type nAChR. Also binds with high affinity to alpha-7/CHRNA7 nAChRs. In addition, shows a weak inhibition of neuronal alpha-3-beta-2/CHRNA3-CHRNB2 nAChR. Selectively binds to alpha-1-delta subunit interface of the mouse muscle nicotinic acetylcholine receptor, with a 10-fold higher affinity for the adult than for the fetal receptors. In vivo, when intraperitoneally injected into mice, causes flaccid paralysis and respiratory distress, followed by death within 2-4 hours. The chain is Alpha-elapitoxin-Bc2b from Bungarus candidus (Malayan krait).